Reading from the N-terminus, the 304-residue chain is uncharacterized protein (304 aa).

This sequence belongs to the histone deacetylase family.

Its function is as follows. Putative deacetylase. This is an uncharacterized protein from Synechocystis sp. (strain ATCC 27184 / PCC 6803 / Kazusa).